Reading from the N-terminus, the 585-residue chain is FAD-linked oxidoreductase apf9 (585 aa).

Residues 1–19 (MKPHTVSLVLSNLASLAAA) form the signal peptide. 3 N-linked (GlcNAc...) asparagine glycosylation sites follow: Asn-40, Asn-92, and Asn-117. One can recognise an FAD-binding PCMH-type domain in the interval 108–294 (IGNSPVYVVN…TEITVKTYPT (187 aa)). A Pros-8alpha-FAD histidine modification is found at His-145. Residues Asn-352, Asn-412, and Asn-495 are each glycosylated (N-linked (GlcNAc...) asparagine).

This sequence belongs to the oxygen-dependent FAD-linked oxidoreductase family. FAD is required as a cofactor.

The protein operates within secondary metabolite biosynthesis. FAD-linked oxidoreductase; part of the gene cluster that mediates the biosynthesis of the cyclic tetrapeptide apicidin F (APF). The non-ribosomal peptide synthetase apf1 incorporates four different amino acids to produce apicidin F: L-phenylalanine, D-pipecolic acid (D-pip), N-methoxy-L-tryptophan and L-2-aminooctanedioic acid. L-Phenylalanine is the only proteinogenic amino acid directly used by apf1. The 3 other apf1 substrates are non-proteinogenic and have to be modified by other enzymes of the cluster. Lysine is converted to delta-1-pyrroline-5-carboxylate (P5C) which is reduced to L-pipecolic acid (L-pip) by apf3. L-pip is epimerized to D-pip, probably by apf1 activity, prior to incorporation. L-Tryptophan is N-oxidyzed by one of the cytochrome P450 monooxygenases (apf7 or apf8), and further methylated at the hydroxy group by the O-methyltransferase apf6 to yield N-methoxy-L-tryptophan. The synthesis of the fourth apf1 substrate is more complex. The fatty acid synthase apf5 is involved in the synthesis of the octanoic acid backbone of L-2-aminooctanedioic acid by fixing one acetyl-CoA unit and three malonyl-CoA units. Then one of the cytochrome P450 monooxygenases (apf7 or apf8) may oxidize this backbone to 2-oxooctanoic acid. The aminotransferase apf4 is predicted to catalyze the exchange of the keto group with an amino group. The next step would be the oxidation of 2-aminooctanoic acid by one of the cytochrome P450 monooxygenases (apf7 or apf8). The last step is the oxidation of 2-amino-8-hydroxyoctanoic acid to 2-aminooctanedioic acid is catalyzed by the FAD-dependent monooxygenase apf9. In Gibberella fujikuroi (strain CBS 195.34 / IMI 58289 / NRRL A-6831) (Bakanae and foot rot disease fungus), this protein is FAD-linked oxidoreductase apf9.